Reading from the N-terminus, the 93-residue chain is Co-chaperonin GroES 2 (93 aa).

Residues Met-1–Ala-20 form a disordered region.

This sequence belongs to the GroES chaperonin family. Heptamer of 7 subunits arranged in a ring. Interacts with the chaperonin GroEL.

Its subcellular location is the cytoplasm. Together with the chaperonin GroEL, plays an essential role in assisting protein folding. The GroEL-GroES system forms a nano-cage that allows encapsulation of the non-native substrate proteins and provides a physical environment optimized to promote and accelerate protein folding. GroES binds to the apical surface of the GroEL ring, thereby capping the opening of the GroEL channel. This is Co-chaperonin GroES 2 from Rhodopirellula baltica (strain DSM 10527 / NCIMB 13988 / SH1).